Reading from the N-terminus, the 455-residue chain is CDP-diacylglycerol--serine O-phosphatidyltransferase (455 aa).

2 consecutive PLD phosphodiesterase domains span residues 134–160 and 356–383; these read VFGV…NNVY and GDNT…NPRA.

The protein belongs to the CDP-alcohol phosphatidyltransferase class-II family. In terms of assembly, multimeric.

It localises to the cytoplasm. Its subcellular location is the cell inner membrane. It carries out the reaction a CDP-1,2-diacyl-sn-glycerol + L-serine = a 1,2-diacyl-sn-glycero-3-phospho-L-serine + CMP + H(+). This Haemophilus influenzae (strain ATCC 51907 / DSM 11121 / KW20 / Rd) protein is CDP-diacylglycerol--serine O-phosphatidyltransferase (pssA).